Consider the following 387-residue polypeptide: Alkanesulfonate monooxygenase (387 aa).

Belongs to the SsuD family.

The enzyme catalyses an alkanesulfonate + FMNH2 + O2 = an aldehyde + FMN + sulfite + H2O + 2 H(+). Catalyzes the desulfonation of aliphatic sulfonates. The protein is Alkanesulfonate monooxygenase of Cupriavidus necator (strain ATCC 17699 / DSM 428 / KCTC 22496 / NCIMB 10442 / H16 / Stanier 337) (Ralstonia eutropha).